A 165-amino-acid chain; its full sequence is Nucleotide-binding protein Rcas_1283 (165 aa).

The protein belongs to the YajQ family.

Its function is as follows. Nucleotide-binding protein. The sequence is that of Nucleotide-binding protein Rcas_1283 from Roseiflexus castenholzii (strain DSM 13941 / HLO8).